The sequence spans 330 residues: N-acetyl-gamma-glutamyl-phosphate reductase (330 aa).

Residue C143 is part of the active site.

This sequence belongs to the NAGSA dehydrogenase family. Type 1 subfamily.

Its subcellular location is the cytoplasm. It carries out the reaction N-acetyl-L-glutamate 5-semialdehyde + phosphate + NADP(+) = N-acetyl-L-glutamyl 5-phosphate + NADPH + H(+). It functions in the pathway amino-acid biosynthesis; L-arginine biosynthesis; N(2)-acetyl-L-ornithine from L-glutamate: step 3/4. Catalyzes the NADPH-dependent reduction of N-acetyl-5-glutamyl phosphate to yield N-acetyl-L-glutamate 5-semialdehyde. In Methanocorpusculum labreanum (strain ATCC 43576 / DSM 4855 / Z), this protein is N-acetyl-gamma-glutamyl-phosphate reductase.